We begin with the raw amino-acid sequence, 318 residues long: MRGEIMDYTICREIGKGGFGKVYEVKKKADQKSYALKIETNAPKAGRNSIINEIQAYSELQGCEKIPRLVDHGSYEGLTFLVLPLLKYSLKDLLERHPRFFTKKSATIVGKKLLNAIEFIHGKGRLHRDIKPENVMFGHNNRIYLVDFGMSAPYLRGDGSHIPEVGGKSVSGTLWYMSINTHRGIEQSRRDDLESLFYLLILLYKSRLPWMEPGASVSKKQEARTKEIKENLSVYDLCDGIHGKEHLIKFFQHISSLEFAEKPNYRYLNSLLDKIFHSNKELQGYKRAPKKEDTGLIRTSLWHKFISILSPFEVKYDG.

The 269-residue stretch at 8–276 (YTICREIGKG…YLNSLLDKIF (269 aa)) folds into the Protein kinase domain. Residues 14–22 (IGKGGFGKV) and K37 each bind ATP. D129 functions as the Proton acceptor in the catalytic mechanism.

The protein belongs to the protein kinase superfamily. CK1 Ser/Thr protein kinase family. Casein kinase I subfamily.

Its subcellular location is the nucleus. It catalyses the reaction L-seryl-[protein] + ATP = O-phospho-L-seryl-[protein] + ADP + H(+). The catalysed reaction is L-threonyl-[protein] + ATP = O-phospho-L-threonyl-[protein] + ADP + H(+). Involved in DNA repair. May regulate the activity of protein(s) involved in double strand break repair caused by gamma rays. The protein is Probable casein kinase I homolog ECU11_1980 of Encephalitozoon cuniculi (strain GB-M1) (Microsporidian parasite).